Consider the following 393-residue polypeptide: NAD(P)H-quinone oxidoreductase subunit H, chloroplastic (393 aa).

Belongs to the complex I 49 kDa subunit family. NDH is composed of at least 16 different subunits, 5 of which are encoded in the nucleus.

It localises to the plastid. The protein localises to the chloroplast thylakoid membrane. The enzyme catalyses a plastoquinone + NADH + (n+1) H(+)(in) = a plastoquinol + NAD(+) + n H(+)(out). It catalyses the reaction a plastoquinone + NADPH + (n+1) H(+)(in) = a plastoquinol + NADP(+) + n H(+)(out). Its function is as follows. NDH shuttles electrons from NAD(P)H:plastoquinone, via FMN and iron-sulfur (Fe-S) centers, to quinones in the photosynthetic chain and possibly in a chloroplast respiratory chain. The immediate electron acceptor for the enzyme in this species is believed to be plastoquinone. Couples the redox reaction to proton translocation, and thus conserves the redox energy in a proton gradient. The polypeptide is NAD(P)H-quinone oxidoreductase subunit H, chloroplastic (Nandina domestica (Heavenly bamboo)).